The sequence spans 387 residues: Acetylajmalan esterase (387 aa).

The N-terminal stretch at 1–22 (MGFARLLHLVFSLLVFAGITNG) is a signal peptide. Ser-36 functions as the Nucleophile in the catalytic mechanism. Residues Asn-98, Asn-180, Asn-199, Asn-249, and Asn-296 are each glycosylated (N-linked (GlcNAc...) asparagine). Active-site residues include Asp-337 and His-340.

The protein belongs to the 'GDSL' lipolytic enzyme family.

It catalyses the reaction 17-O-acetylajmaline + H2O = ajmaline + acetate + H(+). It carries out the reaction 17-O-acetylnorajmaline + H2O = norajmaline + acetate + H(+). It functions in the pathway alkaloid biosynthesis; ajmaline biosynthesis. Functionally, acetylesterase involved in the biosynthesis of ajmaline-type monoterpenoid indole alkaloids (MIAs) natural products, important plant-derived pharmaceuticals used in the therapy of heart disorders. Deacetylates 17-O-acetylajmaline and 17-O-acetylnorajmaline to produce ajmaline and norajmaline, but is inactive toward other acetylated alkaloids. The sequence is that of Acetylajmalan esterase from Rauvolfia serpentina (Serpentine wood).